A 207-amino-acid polypeptide reads, in one-letter code: Guanylate kinase (207 aa).

The Guanylate kinase-like domain occupies 4–184; the sequence is GTLYIVSAPS…ALSDLKTIIR (181 aa). ATP is bound at residue 11–18; the sequence is APSGAGKS.

It belongs to the guanylate kinase family.

The protein localises to the cytoplasm. The catalysed reaction is GMP + ATP = GDP + ADP. Functionally, essential for recycling GMP and indirectly, cGMP. This is Guanylate kinase (gmk) from Salmonella typhimurium (strain LT2 / SGSC1412 / ATCC 700720).